We begin with the raw amino-acid sequence, 707 residues long: Solute carrier family 15 member 1 (707 aa).

Residues 1-21 (MGMSKSLSCFGYPLSIFFIVV) traverse the membrane as a helical segment. The Extracellular segment spans residues 22–53 (NEFCERFSYYGMRALLILYFRNFIGWDDNLST). Residue Asn-50 is glycosylated (N-linked (GlcNAc...) asparagine). The helical transmembrane segment at 54–74 (VIYHTFVALCYLTPILGALIA) threads the bilayer. At 75-82 (DAWLGKFK) the chain is on the cytoplasmic side. A helical transmembrane segment spans residues 83–103 (TIVWLSIVYTIGQAVTSLSSV). The Extracellular portion of the chain corresponds to 104-118 (NELTDNNHDGTPDSL). A helical membrane pass occupies residues 119–139 (PVHVAVCMIGLLLIALGTGGI). The Cytoplasmic portion of the chain corresponds to 140–161 (KPCVSAFGGDQFEEGQEKQRNR). Residues 162-182 (FFSIFYLAINAGSLLSTIITP) traverse the membrane as a helical segment. The Extracellular segment spans residues 183 to 198 (MVRVQQCGIHVKQACY). Residues 199-219 (PLAFGIPAILMAVSLIVFIIG) form a helical membrane-spanning segment. The Cytoplasmic portion of the chain corresponds to 220–276 (SGMYKKFKPQGNILSKVVKCICFAIKNRFRHRSKQFPKRAHWLDWAKEKYDERLIAQ). A helical membrane pass occupies residues 277–297 (IKMVTRVLFLYIPLPMFWALF). The Extracellular portion of the chain corresponds to 298–327 (DQQGSRWTLQATTMSGRIGILEIQPDQMQT). Residues 328–348 (VNTILIIILVPIMDAVVYPLI) form a helical membrane-spanning segment. Residues 349–361 (AKCGLNFTSLKKM) are Cytoplasmic-facing. A helical transmembrane segment spans residues 362 to 382 (TIGMFLASMAFVAAAILQVEI). Over 383–583 (DKTLPVFPKA…PPNTMNMAWQ (201 aa)) the chain is Extracellular. The interval 383–583 (DKTLPVFPKA…PPNTMNMAWQ (201 aa)) is extracellular domain (ECD). N-linked (GlcNAc...) asparagine glycosylation is found at Asn-439, Asn-498, and Asn-513. Residues 584-604 (IPQYFLITSGEVVFSITGLEF) form a helical membrane-spanning segment. Topologically, residues 605-618 (SYSQAPSNMKSVLQ) are cytoplasmic. A helical membrane pass occupies residues 619 to 639 (AGWLLTVAVGNIIVLIVAGAG). The Extracellular segment spans residues 640 to 644 (QINKQ). Residues 645-665 (WAEYILFAALLLVVCVIFAIM) form a helical membrane-spanning segment. At 666–707 (ARFYTYVNPAEIEAQFEEDEKKKNPEKNDLYPSLAPVSQTQM) the chain is on the cytoplasmic side. The tract at residues 682–707 (EEDEKKKNPEKNDLYPSLAPVSQTQM) is disordered. The segment covering 684-694 (DEKKKNPEKND) has biased composition (basic and acidic residues).

The protein belongs to the major facilitator superfamily. Proton-dependent oligopeptide transporter (POT/PTR) (TC 2.A.17) family. In terms of assembly, interacts (via extracellular domain region) with trypsin. Intestine, kidney, liver and low in brain.

It is found in the apical cell membrane. It catalyses the reaction a dipeptide(out) + H(+)(out) = a dipeptide(in) + H(+)(in). The enzyme catalyses an L-amino acid tripeptide(out) + H(+)(out) = an L-amino acid tripeptide(in) + H(+)(in). It carries out the reaction L-alanyl-L-lysine(out) + H(+)(out) = L-alanyl-L-lysine(in) + H(+)(in). The catalysed reaction is L-alanyl-L-proline(out) + H(+)(out) = L-alanyl-L-proline(in) + H(+)(in). It catalyses the reaction L-alanyl-L-valine(out) + H(+)(out) = L-alanyl-L-valine(in) + H(+)(in). The enzyme catalyses carnosine(out) + H(+)(out) = carnosine(in) + H(+)(in). It carries out the reaction glycyl-L-glutamine(out) + H(+)(out) = glycyl-L-glutamine(in) + H(+)(in). The catalysed reaction is glycyl-L-leucine(out) + H(+)(out) = glycyl-L-leucine(in) + H(+)(in). It catalyses the reaction glycyl-L-proline(out) + H(+)(out) = glycyl-L-proline(in) + H(+)(in). The enzyme catalyses glycyl-sarcosine(out) + H(+)(out) = glycyl-sarcosine(in) + H(+)(in). It carries out the reaction L-leucyl-L-leucine(out) + H(+)(out) = L-leucyl-L-leucine(in) + H(+)(in). The catalysed reaction is L-leucyl-L-proline(out) + H(+)(out) = L-leucyl-L-proline(in) + H(+)(in). It catalyses the reaction L-phenylalanyl-L-leucine(out) + H(+)(out) = L-phenylalanyl-L-leucine(in) + H(+)(in). The enzyme catalyses L-phenylalanyl-L-phenylalanine(out) + H(+)(out) = L-phenylalanyl-L-phenylalanine(in) + H(+)(in). It carries out the reaction L-lysyl-glycine(out) + H(+)(out) = L-lysyl-glycine(in) + H(+)(in). The catalysed reaction is L-tyrosylglycine(out) + H(+)(out) = L-tyrosylglycine(in) + H(+)(in). It catalyses the reaction L-alanyl-L-aspartate(out) + 2 H(+)(out) = L-alanyl-L-aspartate(in) + 2 H(+)(in). The enzyme catalyses L-aspartyl-glycine(out) + 2 H(+)(out) = L-aspartyl-glycine(in) + 2 H(+)(in). It carries out the reaction glycyl-L-aspartate(out) + 2 H(+)(out) = glycyl-L-aspartate(in) + 2 H(+)(in). The catalysed reaction is glycyl-L-glutamate(out) + 2 H(+)(out) = glycyl-L-glutamate(in) + 2 H(+)(in). It catalyses the reaction L-alanyl-L-leucyl-L-alanine(out) + H(+)(out) = L-alanyl-L-leucyl-L-alanine(in) + H(+)(in). The enzyme catalyses L-alanyl-L-prolylglycine(out) + H(+)(out) = L-alanyl-L-prolylglycine(in) + H(+)(in). It carries out the reaction glycylglycyl-L-isoleucine(out) + H(+)(out) = glycylglycyl-L-isoleucine(in) + H(+)(in). The catalysed reaction is glycylglycyl-L-proline(out) + H(+)(out) = glycylglycyl-L-proline(in) + H(+)(in). It catalyses the reaction L-methionyl-L-phenylalanyl-L-methionine(out) + H(+)(out) = L-methionyl-L-phenylalanyl-L-methionine(in) + H(+)(in). The enzyme catalyses N-acetyl-D-muramoyl-L-alanyl-D-isoglutamine(out) + 2 H(+)(out) = N-acetyl-D-muramoyl-L-alanyl-D-isoglutamine(in) + 2 H(+)(in). It carries out the reaction N(alpha)-formyl-L-methionyl-L-leucyl-L-phenylalanine(out) + 2 H(+)(out) = N(alpha)-formyl-L-methionyl-L-leucyl-L-phenylalanine(in) + 2 H(+)(in). Electrogenic proton-coupled amino-acid transporter that transports oligopeptides of 2 to 4 amino acids with a preference for dipeptides. Transports neutral and monovalently charged peptides with a proton to peptide stoichiometry of 1:1 or 2:1. Primarily responsible for the absorption of dietary di- and tripeptides from the small intestinal lumen. Mediates transepithelial transport of muramyl and N-formylated bacterial dipeptides contributing to recognition of pathogenic bacteria by the mucosal immune system. The sequence is that of Solute carrier family 15 member 1 (SLC15A1) from Oryctolagus cuniculus (Rabbit).